Consider the following 435-residue polypeptide: Actin-like protein 7A (435 aa).

The interval 1-64 is disordered; it reads MWAPPAAIMG…TESKAAKERP (64 aa). The segment covering 20 to 31 has biased composition (low complexity); that stretch reads QAPLQTQALQTA. The interval 31 to 51 is required for interaction with TES; that stretch reads ASLRDGPAKRAVWVRHTSSEP. Basic and acidic residues predominate over residues 55–64; the sequence is TESKAAKERP.

It belongs to the actin family. As to quaternary structure, interacts (via N-terminus) with TES (via LIM domain 2). Heterodimer with TES; the heterodimer interacts with ENAH to form a heterotrimer. Interacts with ACTL9. Interacts with CYLC1; the interaction may be relevant for proper acrosome attachment to the nuclear envelope. In terms of tissue distribution, strongly expressed in testis. Also expressed in other tissues.

It localises to the cytoplasm. The protein resides in the cytoskeleton. Its subcellular location is the golgi apparatus. The protein localises to the nucleus. It is found in the cytoplasmic vesicle. It localises to the secretory vesicle. The protein resides in the acrosome. Essential for normal spermatogenesis and male fertility. Required for normal sperm head morphology, acroplaxome formation, acrosome attachment, and acrosome granule stability. May anchor and stabilize acrosomal adherence to the acroplaxome at least in part by facilitating the presence of F-actin in the subacrosomal space. May play an important role in formation and fusion of Golgi-derived vesicles during acrosome biogenesis. The polypeptide is Actin-like protein 7A (ACTL7A) (Homo sapiens (Human)).